Here is a 308-residue protein sequence, read N- to C-terminus: Staphylococcal superantigen-like 4 (308 aa).

The first 30 residues, 1–30, serve as a signal peptide directing secretion; the sequence is MKITTIAKTSLALGLLTTGVITTTTQAANA. The tract at residues 32–117 is disordered; the sequence is TLSSTKVEAP…TTKQVPTEIN (86 aa). Composition is skewed to polar residues over residues 33–47 and 55–76; these read LSSTKVEAPQSTPPS and SKPNATTPPSTKVEAPQQTANA. Positions 77–93 are enriched in low complexity; the sequence is TTPPSTKVTTPPSTNTP. Residues 94–114 are compositionally biased toward polar residues; that stretch reads QPMQSTKSDTPQSPTTKQVPT. The interval 180 to 278 is sialyl Lewis X-binding; it reads VDVFVVLEEN…VIKMKNGGKY (99 aa).

It belongs to the staphylococcal/streptococcal toxin family.

The protein resides in the secreted. Secreted protein that plays a role in immune innate response inhibition by interfering with host TLR2-mediated pathway. The chain is Staphylococcal superantigen-like 4 from Staphylococcus aureus (strain NCTC 8325 / PS 47).